A 710-amino-acid polypeptide reads, in one-letter code: Secretin OutD (710 aa).

The N-terminal stretch at 1–27 (MLGKGIKKSWGWLGLTVLLLGSPCGWA) is a signal peptide. The segment at 28 to 105 (AEFSASFKGT…DNGVLKVIRS (78 aa)) is N0. Residues 123–190 (IGDELVTRVV…DIVNTVDKTG (68 aa)) are N1. The tract at residues 192–262 (REMVTVPLTY…VEMIRQLDRK (71 aa)) is N2. The interval 288–399 (GNGTSGNRNS…INQLDIRRPQ (112 aa)) is N3. Residues 289-353 (NGTSGNRNSS…AFGSTSSSGG (65 aa)) are disordered. The secretin stretch occupies residues 401-648 (LVEAIIAEIQ…MLFLRPTIIR (248 aa)). The tract at residues 691–710 (TYTFRQVQSSISDFYKPEGR) is s domain.

Belongs to the bacterial secretin family. GSP D subfamily. As to quaternary structure, forms a cylindrical channel with 15 subunits. Interacts with pilotin OutS.

It localises to the cell outer membrane. Functionally, involved in a type II secretion system (T2SS, formerly general secretion pathway, GSP) for the export of proteins. Required for the translocation of the multiple pectic enzymes. This subunit forms the outer membrane channel. The sequence is that of Secretin OutD (outD) from Dickeya dadantii (strain 3937) (Erwinia chrysanthemi (strain 3937)).